A 261-amino-acid chain; its full sequence is HLA class II histocompatibility antigen, DQ beta 1 chain (261 aa).

A signal peptide spans 1 to 32; that stretch reads MSWKKALRIPGGLRAATVTLMLAMLSTPVAEG. A beta-1 region spans residues 33–126; that stretch reads RDSPEDFVYQ…LELRTTLQRR (94 aa). Residues 33–230 lie on the Extracellular side of the membrane; the sequence is RDSPEDFVYQ…RAQSESAQSK (198 aa). 2 disulfides stabilise this stretch: C47–C111 and C149–C205. The N-linked (GlcNAc...) asparagine glycan is linked to N51. Residues 127 to 220 are beta-2; sequence VEPTVTISPS…SLQNPITVEW (94 aa). An Ig-like C1-type domain is found at 129 to 217; sequence PTVTISPSRT…EHPSLQNPIT (89 aa). The interval 221–230 is connecting peptide; it reads RAQSESAQSK. A helical transmembrane segment spans residues 231 to 251; it reads MLSGIGGFVLGLIFLGLGLII. Topologically, residues 252 to 261 are cytoplasmic; that stretch reads HHRSQKGLLH.

It belongs to the MHC class II family. Heterodimer of an alpha and a beta subunit; also referred as MHC class II molecule. In the endoplasmic reticulum (ER) it forms a heterononamer; 3 MHC class II molecules bind to a CD74 homotrimer (also known as invariant chain or HLA class II histocompatibility antigen gamma chain). In the endosomal/lysosomal system; CD74 undergoes sequential degradation by various proteases; leaving a small fragment termed CLIP on each MHC class II molecule. MHC class II molecule interacts with HLA_DM, and HLA_DO in B-cells, in order to release CLIP and facilitate the binding of antigenic peptides.

Its subcellular location is the cell membrane. The protein localises to the endoplasmic reticulum membrane. It localises to the golgi apparatus. It is found in the trans-Golgi network membrane. The protein resides in the endosome membrane. Its subcellular location is the lysosome membrane. Functionally, binds peptides derived from antigens that access the endocytic route of antigen presenting cells (APC) and presents them on the cell surface for recognition by the CD4 T-cells. The peptide binding cleft accommodates peptides of 10-30 residues. The peptides presented by MHC class II molecules are generated mostly by degradation of proteins that access the endocytic route, where they are processed by lysosomal proteases and other hydrolases. Exogenous antigens that have been endocytosed by the APC are thus readily available for presentation via MHC II molecules, and for this reason this antigen presentation pathway is usually referred to as exogenous. As membrane proteins on their way to degradation in lysosomes as part of their normal turn-over are also contained in the endosomal/lysosomal compartments, exogenous antigens must compete with those derived from endogenous components. Autophagy is also a source of endogenous peptides, autophagosomes constitutively fuse with MHC class II loading compartments. In addition to APCs, other cells of the gastrointestinal tract, such as epithelial cells, express MHC class II molecules and CD74 and act as APCs, which is an unusual trait of the GI tract. To produce a MHC class II molecule that presents an antigen, three MHC class II molecules (heterodimers of an alpha and a beta chain) associate with a CD74 trimer in the ER to form a heterononamer. Soon after the entry of this complex into the endosomal/lysosomal system where antigen processing occurs, CD74 undergoes a sequential degradation by various proteases, including CTSS and CTSL, leaving a small fragment termed CLIP (class-II-associated invariant chain peptide). The removal of CLIP is facilitated by HLA-DM via direct binding to the alpha-beta-CLIP complex so that CLIP is released. HLA-DM stabilizes MHC class II molecules until primary high affinity antigenic peptides are bound. The MHC II molecule bound to a peptide is then transported to the cell membrane surface. In B-cells, the interaction between HLA-DM and MHC class II molecules is regulated by HLA-DO. Primary dendritic cells (DCs) also to express HLA-DO. Lysosomal microenvironment has been implicated in the regulation of antigen loading into MHC II molecules, increased acidification produces increased proteolysis and efficient peptide loading. This chain is HLA class II histocompatibility antigen, DQ beta 1 chain (HLA-DQB1), found in Homo sapiens (Human).